The sequence spans 148 residues: uncharacterized protein (148 aa).

The HTH asnC-type domain maps to 4 to 65; it reads LDKVDIQLVK…IPDLDKLGYM (62 aa). Positions 23 to 42 form a DNA-binding region, H-T-H motif; that stretch reads YRELAELMNTTRQRIARRIT.

This is an uncharacterized protein from Pyrococcus abyssi (strain GE5 / Orsay).